Consider the following 249-residue polypeptide: Acidic leucine-rich nuclear phosphoprotein 32 family member A (249 aa).

Phosphothreonine is present on T15. S17 carries the post-translational modification Phosphoserine. 4 LRR repeats span residues 18–38 (DVKE…EGLT), 43–64 (ELEF…PKLN), 65–87 (KLKK…AEKC), and 89–110 (NLTH…EPLK). Residues 123-161 (CEVTNLNDYRENVFKLLPQLTYLDGYDRDDKEAPDSDAE) enclose the LRRCT domain. The span at 147–156 (GYDRDDKEAP) shows a compositional bias: basic and acidic residues. Residues 147-249 (GYDRDDKEAP…EPEDEGEDDD (103 aa)) are disordered. The interval 150 to 174 (RDDKEAPDSDAEGYVEGLDDDEEDE) is necessary for tumor-suppressive function. Acidic residues predominate over residues 157-230 (DSDAEGYVEG…DEEDEEELGE (74 aa)). Phosphoserine occurs at positions 158 and 204. The interaction with E4F1 stretch occupies residues 165-249 (EGLDDDEEDE…EPEDEGEDDD (85 aa)).

This sequence belongs to the ANP32 family. In terms of assembly, component of the SET complex, composed of at least ANP32A, APEX1, HMGB2, NME1, SET and TREX1. Directly interacts with SET. Interacts with ATXN1/SCA1. Interacts with MAP1B. Interacts with ELAVL1. Part of the INHAT (inhibitor of histone acetyltransferases) complex. Interacts with E4F1. The N-terminus is blocked. Post-translationally, phosphorylated on serine residues, at least in part by casein kinase 2/CK2. In terms of processing, some glutamate residues are glycylated by TTLL8. This modification occurs exclusively on glutamate residues and results in a glycine chain on the gamma-carboxyl group. Widely distributed in the central nervous system, with an abundant expression in the cerebellum.

The protein resides in the nucleus. It is found in the cytoplasm. The protein localises to the endoplasmic reticulum. Multifunctional protein that is involved in the regulation of many processes including tumor suppression, apoptosis, cell cycle progression or transcription. Promotes apoptosis by favouring the activation of caspase-9/CASP9 and allowing apoptosome formation. In addition, plays a role in the modulation of histone acetylation and transcription as part of the INHAT (inhibitor of histone acetyltransferases) complex. Inhibits the histone-acetyltranferase activity of EP300/CREBBP (CREB-binding protein) and EP300/CREBBP-associated factor by histone masking. Preferentially binds to unmodified histone H3 and sterically inhibiting its acetylation and phosphorylation leading to cell growth inhibition. Participates in other biochemical processes such as regulation of mRNA nuclear-to-cytoplasmic translocation and stability by its association with ELAVL1 (Hu-antigen R). Plays a role in E4F1-mediated transcriptional repression as well as inhibition of protein phosphatase 2A. This chain is Acidic leucine-rich nuclear phosphoprotein 32 family member A (ANP32A), found in Bos taurus (Bovine).